The following is a 284-amino-acid chain: MEMO1 family protein MMP1387 (284 aa).

It belongs to the MEMO1 family.

The sequence is that of MEMO1 family protein MMP1387 from Methanococcus maripaludis (strain DSM 14266 / JCM 13030 / NBRC 101832 / S2 / LL).